The primary structure comprises 84 residues: Small ribosomal subunit protein uS17c (84 aa).

Belongs to the universal ribosomal protein uS17 family. Part of the 30S ribosomal subunit.

The protein resides in the plastid. It is found in the chloroplast. In terms of biological role, one of the primary rRNA binding proteins, it binds specifically to the 5'-end of 16S ribosomal RNA. The sequence is that of Small ribosomal subunit protein uS17c (rps17) from Thalassiosira pseudonana (Marine diatom).